A 695-amino-acid polypeptide reads, in one-letter code: Phosphate acetyltransferase (695 aa).

A phosphate acetyltransferase region spans residues 374–695; the sequence is FRYQLIQRAQ…LTAIQASVAR (322 aa).

It in the N-terminal section; belongs to the CobB/CobQ family. In the C-terminal section; belongs to the phosphate acetyltransferase and butyryltransferase family. As to quaternary structure, homohexamer.

It is found in the cytoplasm. It carries out the reaction acetyl-CoA + phosphate = acetyl phosphate + CoA. Its pathway is metabolic intermediate biosynthesis; acetyl-CoA biosynthesis; acetyl-CoA from acetate: step 2/2. Involved in acetate metabolism. This is Phosphate acetyltransferase (pta) from Pseudomonas putida (strain ATCC 47054 / DSM 6125 / CFBP 8728 / NCIMB 11950 / KT2440).